The following is a 458-amino-acid chain: D-inositol 3-phosphate glycosyltransferase (458 aa).

His-16 contributes to the 1D-myo-inositol 3-phosphate binding site. UDP-N-acetyl-alpha-D-glucosamine contacts are provided by residues 22-23 and Gly-30; that span reads QP. 1D-myo-inositol 3-phosphate is bound by residues 27 to 32, Lys-85, Tyr-118, Thr-142, and Arg-162; that span reads DAGGMN. Arg-236, Lys-241, and Gln-302 together coordinate UDP-N-acetyl-alpha-D-glucosamine. Residues Tyr-311, Arg-312, and Ser-314 each contribute to the Mg(2+) site. UDP-N-acetyl-alpha-D-glucosamine-binding residues include Glu-324 and Glu-332. Thr-338 contacts Mg(2+). The segment at 428–458 is disordered; sequence VAAQNVTGSSSRTRRPWRRRRSTLLPMTGRS. A compositionally biased stretch (basic residues) spans 439–449; the sequence is RTRRPWRRRRS.

Belongs to the glycosyltransferase group 1 family. MshA subfamily. In terms of assembly, homodimer.

The enzyme catalyses 1D-myo-inositol 3-phosphate + UDP-N-acetyl-alpha-D-glucosamine = 1D-myo-inositol 2-acetamido-2-deoxy-alpha-D-glucopyranoside 3-phosphate + UDP + H(+). Functionally, catalyzes the transfer of a N-acetyl-glucosamine moiety to 1D-myo-inositol 3-phosphate to produce 1D-myo-inositol 2-acetamido-2-deoxy-glucopyranoside 3-phosphate in the mycothiol biosynthesis pathway. This Gordonia bronchialis (strain ATCC 25592 / DSM 43247 / BCRC 13721 / JCM 3198 / KCTC 3076 / NBRC 16047 / NCTC 10667) (Rhodococcus bronchialis) protein is D-inositol 3-phosphate glycosyltransferase.